A 293-amino-acid chain; its full sequence is Nucleotide-binding protein LBA0691 (293 aa).

An ATP-binding site is contributed by 13 to 20 (GMSGAGKT). Position 63–66 (63–66 (DLRV)) interacts with GTP.

It belongs to the RapZ-like family.

In terms of biological role, displays ATPase and GTPase activities. The chain is Nucleotide-binding protein LBA0691 from Lactobacillus acidophilus (strain ATCC 700396 / NCK56 / N2 / NCFM).